The following is a 267-amino-acid chain: Putative metal-binding protein TM_0123 (267 aa).

The signal sequence occupies residues 1–15 (MKKILLLLVLIVAVL). A divalent metal cation is bound by residues His53, His107, and His172.

Belongs to the bacterial solute-binding protein 9 family.

It is found in the periplasm. Functionally, part of an ATP-binding cassette (ABC) transport system involved in metal import. Binds a metal with high affinity and specificity and delivers it to the membrane permease for translocation into the cytoplasm. The sequence is that of Putative metal-binding protein TM_0123 from Thermotoga maritima (strain ATCC 43589 / DSM 3109 / JCM 10099 / NBRC 100826 / MSB8).